A 460-amino-acid chain; its full sequence is EPD1-interacting receptor-like cytoplasmic serine/threonine-protein kinase 5D (460 aa).

The 282-residue stretch at 83-364 folds into the Protein kinase domain; that stretch reads FSSANFLGEG…DVVNILEPLL (282 aa). ATP-binding positions include 89–97 and lysine 118; that span reads LGEGGFGPV. Tyrosine 163 and tyrosine 165 each carry phosphotyrosine. Aspartate 213 serves as the catalytic Proton acceptor.

The protein belongs to the protein kinase superfamily. Ser/Thr protein kinase family. As to quaternary structure, interacts with the V.dahliae elicitor EPD1 (AC G2WWH6). Post-translationally, phosphorylated at Tyr-163 and Tyr-165 in the presence of pathogen-associated molecular patterns (PAMPs); this triggers the expression of pathogenesis-related genes. Mostly expressed in roots and, to a lesser extent, in leaves.

The protein localises to the cell membrane. It catalyses the reaction L-seryl-[protein] + ATP = O-phospho-L-seryl-[protein] + ADP + H(+). The catalysed reaction is L-threonyl-[protein] + ATP = O-phospho-L-threonyl-[protein] + ADP + H(+). Required for pathogen-associated molecular pattern (PAMP, e.g. chitin and flg22)-triggered immunity (PTI) involving reactive oxygen species (ROS) accumulation and triggering plant defense, including defense-related gene expression (e.g. PR1 and LOX). Ensures specific recognition of the EPD1 effector of Verticillium dahliae, resulting in a hypersensitive response known as effector-triggered immunity (ETI), characterized by the activation of programmed cell death to limit infection by the pathogen. Priming plants with the incompatible pathogen V.dahliae leads to an increased resistance to compatible pathogens, as a result of systemic acquired resistance (SAR). The chain is EPD1-interacting receptor-like cytoplasmic serine/threonine-protein kinase 5D from Gossypium barbadense (Sea Island cotton).